We begin with the raw amino-acid sequence, 534 residues long: MHVSNSKFIFVTGGVLSSLGKGVASASIGALLEGLGLSITLQKLDPYLNVDPGTMNPYQHGEVFVTEDGAETDLDLGHYERFTNTNLSKLNNITAGKIYNSVLEKERKGAYLGSTVQVIPHVTDEIKSMILKASKDKDIAIVEIGGTVGDIESLPFLEAIRQLQLEIGKENTLFIHLTYVPYISVAGELKTKPTQHSVKELRAIGIQPDIIICRSEVELPQDVKSKIAMFCNVKPENVISAYDVDYIYKIPLILKAQNLDKIIIDAFRLENKEPNLTKWENIVSSLEHLKDSVDIAIVGKYIKLKDAYKSLIEALIHGGIEHKLKVNMIWVDSENLNEKDLEHVDGILIPGGFGERGIEGKIRALNYGRTKNIPTFGICLGMQLMAVEFARNVLGFKDANSTEFDPNTSNPVIDIMEEQKGIENLGGTMRLGAYECLIKENTKAYEIYKENLIYERHRHRYEFNNKYKEHFEKHGFIASGIYPKKSLVEIIELQNHRWYIGCQFHPEFKSKPFKAHKLFASFIENAYIYKKERS.

Residues 1–269 (MHVSNSKFIF…DKIIIDAFRL (269 aa)) are amidoligase domain. Ser-17 contacts CTP. Ser-17 is a UTP binding site. 18–23 (SLGKGV) lines the ATP pocket. Tyr-58 contributes to the L-glutamine binding site. Asp-75 is an ATP binding site. The Mg(2+) site is built by Asp-75 and Glu-143. CTP is bound by residues 150–152 (DIE), 190–195 (KTKPTQ), and Lys-226. UTP is bound by residues 190–195 (KTKPTQ) and Lys-226. Residues 294-532 (DIAIVGKYIK…IENAYIYKKE (239 aa)) enclose the Glutamine amidotransferase type-1 domain. Position 352 (Gly-352) interacts with L-glutamine. Cys-379 serves as the catalytic Nucleophile; for glutamine hydrolysis. L-glutamine contacts are provided by residues 380-383 (LGMQ), Glu-403, and Arg-460. Active-site residues include His-505 and Glu-507.

The protein belongs to the CTP synthase family. Homotetramer.

It carries out the reaction UTP + L-glutamine + ATP + H2O = CTP + L-glutamate + ADP + phosphate + 2 H(+). It catalyses the reaction L-glutamine + H2O = L-glutamate + NH4(+). The enzyme catalyses UTP + NH4(+) + ATP = CTP + ADP + phosphate + 2 H(+). The protein operates within pyrimidine metabolism; CTP biosynthesis via de novo pathway; CTP from UDP: step 2/2. Its activity is regulated as follows. Allosterically activated by GTP, when glutamine is the substrate; GTP has no effect on the reaction when ammonia is the substrate. The allosteric effector GTP functions by stabilizing the protein conformation that binds the tetrahedral intermediate(s) formed during glutamine hydrolysis. Inhibited by the product CTP, via allosteric rather than competitive inhibition. Catalyzes the ATP-dependent amination of UTP to CTP with either L-glutamine or ammonia as the source of nitrogen. Regulates intracellular CTP levels through interactions with the four ribonucleotide triphosphates. The protein is CTP synthase of Hydrogenobaculum sp. (strain Y04AAS1).